A 648-amino-acid polypeptide reads, in one-letter code: cAMP-dependent protein kinase catalytic subunit (648 aa).

4 stretches are compositionally biased toward low complexity: residues 1-20 (MSNS…TINN), 46-67 (SGNN…NSSG), 136-175 (QQQP…PQQQ), and 232-254 (NTPS…NPHT). 4 disordered regions span residues 1 to 25 (MSNS…KVNV), 40 to 86 (GGGG…TKMD), 121 to 175 (KVPS…PQQQ), and 219 to 290 (QQQQ…DTNP). Over residues 255 to 290 (SGLSLQHAHSSYTPSNVLHSPTHFQSSLPTRLDTNP) the composition is skewed to polar residues. A Protein kinase domain is found at 336–590 (FKQIRVIGTG…ALDVKNHRWF (255 aa)). Residues 342–350 (IGTGTFGKV) and K365 each bind ATP. The Proton acceptor role is filled by D459. Phosphothreonine is present on T490. The AGC-kinase C-terminal domain occupies 591–648 (SDINWERLYQRRDNGPFIPKIQHQGDSSNFEMYDEEEMVEEPPSSNYVDPYAHLFKDF).

It belongs to the protein kinase superfamily. AGC Ser/Thr protein kinase family. cAMP subfamily. In Dictyostelium the holoenzyme is a dimer composed of a regulatory (R) and a catalytic (C) subunit. In the presence of cAMP it dissociates into the active C subunit and an R monomer.

The catalysed reaction is L-seryl-[protein] + ATP = O-phospho-L-seryl-[protein] + ADP + H(+). It catalyses the reaction L-threonyl-[protein] + ATP = O-phospho-L-threonyl-[protein] + ADP + H(+). Its function is as follows. Essential for differentiation and fruit morphogenesis. This is cAMP-dependent protein kinase catalytic subunit (pkaC) from Dictyostelium discoideum (Social amoeba).